The sequence spans 874 residues: Leucine--tRNA ligase (874 aa).

The short motif at 43 to 53 (PYPSGRIHIGH) is the 'HIGH' region element. Residues 614–634 (LDDGSPVTVGPPEKMSKSKKN) are disordered. Positions 627–631 (KMSKS) match the 'KMSKS' region motif. An ATP-binding site is contributed by K630.

It belongs to the class-I aminoacyl-tRNA synthetase family.

It localises to the cytoplasm. The catalysed reaction is tRNA(Leu) + L-leucine + ATP = L-leucyl-tRNA(Leu) + AMP + diphosphate. This chain is Leucine--tRNA ligase, found in Azorhizobium caulinodans (strain ATCC 43989 / DSM 5975 / JCM 20966 / LMG 6465 / NBRC 14845 / NCIMB 13405 / ORS 571).